The chain runs to 223 residues: Translation initiation factor 6 (223 aa).

The protein belongs to the eIF-6 family.

Its function is as follows. Binds to the 50S ribosomal subunit and prevents its association with the 30S ribosomal subunit to form the 70S initiation complex. The chain is Translation initiation factor 6 from Thermofilum pendens (strain DSM 2475 / Hrk 5).